The following is a 325-amino-acid chain: Tumor necrosis factor soluble receptor (325 aa).

The first 16 residues, 1–16, serve as a signal peptide directing secretion; that stretch reads MLRLIALLVCVVYVYG. 4 TNFR-Cys repeats span residues 27-62, 63-104, 105-147, and 148-186; these read KCGG…TVCS, PCED…DRVC, NCST…TLCE, and KCPP…TSCT. Disulfide bonds link C28–C39, C40–C53, C43–C61, C64–C79, C82–C96, and C86–C104. An N-linked (GlcNAc...) asparagine; by host glycan is attached at N105. Cystine bridges form between C106/C120, C123/C146, C129/C149, and C164/C185. N-linked (GlcNAc...) asparagine; by host glycosylation is found at N181, N205, and N238.

Functionally, binds to TNF-alpha and beta. Probably prevents TNF to reach cellular target and thereby deampening the potential antiviral effects of the cytokine. The chain is Tumor necrosis factor soluble receptor from Oryctolagus cuniculus (Rabbit).